We begin with the raw amino-acid sequence, 399 residues long: uncharacterized protein (399 aa).

It belongs to the NADH:flavin oxidoreductase/NADH oxidase family. Directly interacts with lipoylated GcvH-L (SpyM50867).

This is an uncharacterized protein from Streptococcus pyogenes serotype M5 (strain Manfredo).